We begin with the raw amino-acid sequence, 428 residues long: Putative POM121-like protein 1 (428 aa).

5 disordered regions span residues 1 to 23 (MDSL…RLSP), 36 to 204 (KESG…KFPL), 254 to 293 (DCRP…HKSQ), 306 to 384 (TEVP…PSTL), and 402 to 428 (GPQP…SCPK). The segment covering 44–62 (EQDKDPRVQENPGDQRRVP) has biased composition (basic and acidic residues). The segment covering 106–117 (QTSQTSWTSSCT) has biased composition (low complexity). Composition is skewed to polar residues over residues 118–129 (NRNAISSSYSST), 144–155 (SHCQLTLSSSKT), 260–269 (PSHTLSSLAT), 326–347 (FSSS…QVTS), and 403–415 (PQPQ…RGQN). The span at 416 to 428 (QRSQTSRTSSCPK) shows a compositional bias: low complexity.

Belongs to the POM121 family.

The sequence is that of Putative POM121-like protein 1 (POM121L1P) from Homo sapiens (Human).